Here is a 386-residue protein sequence, read N- to C-terminus: N-acetylneuraminate epimerase (386 aa).

The N-terminal stretch at 1–29 is a signal peptide; sequence MGMQMKNFKKMMTLMALCFSVAITTSGYA. Kelch repeat units follow at residues 51-95, 97-149, 151-186, 187-232, 235-284, 306-355, and 357-386; these read VIYV…VFLN, ELYV…VKLN, TMVLITGGVNEHIFDKYFIDIAAAAADESEKNKVIY, NYFN…VMGN, LMLI…LAGA, QNYT…SYGD, and VFLIGGENAKGKPVSSVTSFTMRDGNLLIK. The active-site Proton acceptor is the Glu241.

It belongs to the NanM family. As to quaternary structure, homodimer.

The protein localises to the periplasm. It carries out the reaction N-acetyl-alpha-neuraminate = N-acetyl-beta-neuraminate. Converts alpha-N-acetylneuranimic acid (Neu5Ac) to the beta-anomer, accelerating the equilibrium between the alpha- and beta-anomers. Probably facilitates sialidase-negative bacteria to compete successfully for limited amounts of extracellular Neu5Ac, which is likely taken up in the beta-anomer. In addition, the rapid removal of sialic acid from solution might be advantageous to the bacterium to damp down host responses. The chain is N-acetylneuraminate epimerase from Salmonella typhimurium (strain LT2 / SGSC1412 / ATCC 700720).